A 212-amino-acid chain; its full sequence is uncharacterized protein (212 aa).

S-adenosyl-L-methionine contacts are provided by Gly-53 and Glu-74.

Belongs to the methyltransferase superfamily. YrrT family.

Its function is as follows. Could be a S-adenosyl-L-methionine-dependent methyltransferase. This is an uncharacterized protein from Exiguobacterium sibiricum (strain DSM 17290 / CCUG 55495 / CIP 109462 / JCM 13490 / 255-15).